A 1580-amino-acid chain; its full sequence is Transcriptional activator GLI3 (1580 aa).

At Met-1 the chain carries N-acetylmethionine. Polar residues-rich tracts occupy residues 1–10 and 58–78; these read MEAQSHSSTT and ITMQ…PSTS. Residues 1–79 are disordered; sequence MEAQSHSSTT…KVSEEPSTSS (79 aa). Position 175 is an omega-N-methylarginine (Arg-175). The interval 368–475 is disordered; that stretch reads QSLGSAFGHS…DKDESKQEPE (108 aa). Positions 401-427 are enriched in polar residues; it reads NPVQVSSGPSESSQNKPTSESAVSSTG. Residues Lys-438 and Lys-462 each participate in a glycyl lysine isopeptide (Lys-Gly) (interchain with G-Cter in SUMO2) cross-link. A compositionally biased stretch (basic and acidic residues) spans 461 to 474; the sequence is VKEEGDKDESKQEP. 5 consecutive C2H2-type zinc fingers follow at residues 480 to 505, 513 to 540, 546 to 570, 576 to 601, and 607 to 632; these read TNCH…NNDH, FVCR…MRRH, HKCT…LRSH, YVCE…NRTH, and YVCK…KTVH. The tract at residues 620–728 is disordered; that stretch reads DPSSLRKHVK…PISNYSNSGL (109 aa). Residues 632 to 648 are compositionally biased toward basic and acidic residues; the sequence is HGPEAHVTKKQRGDIHP. Position 664 is a phosphoserine (Ser-664). Basic and acidic residues predominate over residues 684-699; the sequence is SKREECLQVKTVKAEK. The span at 703 to 726 shows a compositional bias: low complexity; that stretch reads SQPSPGGQSSCSSQQSPISNYSNS. The segment at 745-845 is mediates interaction with DZIP1; sequence DETPIMDSTI…VDVTMLNMLN (101 aa). A Glycyl lysine isopeptide (Lys-Gly) (interchain with G-Cter in ubiquitin) cross-link involves residue Lys-773. A Glycyl lysine isopeptide (Lys-Gly) (interchain with G-Cter in SUMO2); alternate cross-link involves residue Lys-779. Residue Lys-779 forms a Glycyl lysine isopeptide (Lys-Gly) (interchain with G-Cter in ubiquitin); alternate linkage. Residues Lys-784 and Lys-800 each participate in a glycyl lysine isopeptide (Lys-Gly) (interchain with G-Cter in ubiquitin) cross-link. 4 positions are modified to phosphoserine; by PKA: Ser-849, Ser-865, Ser-877, and Ser-907. Positions 863-882 are enriched in low complexity; that stretch reads RSSGISPCFSSRRSSEASQA. The interval 863-918 is disordered; sequence RSSGISPCFSSRRSSEASQAEGRPQNVSVADSYDPISTDASRRSSEASQSDGLPSL. Residues 908–918 show a composition bias toward polar residues; it reads EASQSDGLPSL. Residues Ser-980 and Ser-1006 each carry the phosphoserine; by PKA modification. The segment at 981–1042 is disordered; the sequence is DGGAHGYGRR…PAMATSAEKR (62 aa).

Belongs to the GLI C2H2-type zinc-finger protein family. In terms of assembly, the full-length GLI3 form (GLI3FL) interacts with SUFU and this interaction regulates the formation of either repressor or activator forms of GLI3. Its association with SUFU is regulated by Hh signaling and dissociation of the SUFU-GLI3 interaction requires the presence of the ciliary motor KIF3A. Interacts with KIF7. The activator form of GLI3 (GLI3A) but not the repressor form (GLI3R) can interact with TRPS1. The phosphorylated form interacts with BTRC. Interacts with ZIC1. Interacts with ZIC3 (via C2H2-type domains 3, 4 and 5); the interaction enhances its transcriptional activity. Interacts with WRD11; the interaction associates EMX1 with GLI3. Interacts with DZIP1; retains GLI3 within the cytoplasm. Phosphorylated on multiple sites by protein kinase A (PKA) and phosphorylation by PKA primes further phosphorylation by CK1 and GSK3. Phosphorylated by DYRK2 (in vitro). Phosphorylation is essential for its proteolytic processing. In terms of processing, transcriptional repressor GLI3R, a C-terminally truncated form, is generated from the full-length GLI3 protein (GLI3FL/GLI3-190) through proteolytic processing. This process requires PKA-primed phosphorylation of GLI3, ubiquitination of GLI3 and the presence of BTRC. GLI3FL is complexed with SUFU in the cytoplasm and is maintained in a neutral state. Without the Hh signal, the SUFU-GLI3 complex is recruited to cilia, leading to the efficient processing of GLI3FL into GLI3R. GLI3R formation leads to its dissociation from SUFU, allowing it to translocate into the nucleus, and repress Hh target genes. When Hh signaling is initiated, SUFU dissociates from GLI3FL and this has two consequences. First, GLI3R production is halted. Second, free GLI3FL translocates to the nucleus, where it is phosphorylated, destabilized, and converted to a transcriptional activator (GLI3A). Phosphorylated in vitro by ULK3. As to expression, is expressed in a wide variety of normal adult tissues, including lung, colon, spleen, placenta, testis, and myometrium.

The protein resides in the nucleus. It localises to the cytoplasm. The protein localises to the cell projection. It is found in the cilium. Functionally, has a dual function as a transcriptional activator and a repressor of the sonic hedgehog (Shh) pathway, and plays a role in limb development. The full-length GLI3 form (GLI3FL) after phosphorylation and nuclear translocation, acts as an activator (GLI3A) while GLI3R, its C-terminally truncated form, acts as a repressor. A proper balance between the GLI3 activator and the repressor GLI3R, rather than the repressor gradient itself or the activator/repressor ratio gradient, specifies limb digit number and identity. In concert with TRPS1, plays a role in regulating the size of the zone of distal chondrocytes, in restricting the zone of PTHLH expression in distal cells and in activating chondrocyte proliferation. Binds to the minimal GLI-consensus sequence 5'-GGGTGGTC-3'. This chain is Transcriptional activator GLI3 (GLI3), found in Homo sapiens (Human).